The chain runs to 118 residues: Ribonuclease P protein component (118 aa).

The protein belongs to the RnpA family. As to quaternary structure, consists of a catalytic RNA component (M1 or rnpB) and a protein subunit.

The catalysed reaction is Endonucleolytic cleavage of RNA, removing 5'-extranucleotides from tRNA precursor.. Functionally, RNaseP catalyzes the removal of the 5'-leader sequence from pre-tRNA to produce the mature 5'-terminus. It can also cleave other RNA substrates such as 4.5S RNA. The protein component plays an auxiliary but essential role in vivo by binding to the 5'-leader sequence and broadening the substrate specificity of the ribozyme. This is Ribonuclease P protein component from Ureaplasma urealyticum serovar 10 (strain ATCC 33699 / Western).